A 557-amino-acid polypeptide reads, in one-letter code: Dihydroxy-acid dehydratase (557 aa).

Asp-78 is a Mg(2+) binding site. Cys-119 contributes to the [2Fe-2S] cluster binding site. Positions 120 and 121 each coordinate Mg(2+). Position 121 is an N6-carboxylysine (Lys-121). Cys-192 provides a ligand contact to [2Fe-2S] cluster. Position 443 (Glu-443) interacts with Mg(2+). Catalysis depends on Ser-469, which acts as the Proton acceptor.

Belongs to the IlvD/Edd family. As to quaternary structure, homodimer. Requires [2Fe-2S] cluster as cofactor. Mg(2+) is required as a cofactor.

It catalyses the reaction (2R)-2,3-dihydroxy-3-methylbutanoate = 3-methyl-2-oxobutanoate + H2O. The catalysed reaction is (2R,3R)-2,3-dihydroxy-3-methylpentanoate = (S)-3-methyl-2-oxopentanoate + H2O. It functions in the pathway amino-acid biosynthesis; L-isoleucine biosynthesis; L-isoleucine from 2-oxobutanoate: step 3/4. It participates in amino-acid biosynthesis; L-valine biosynthesis; L-valine from pyruvate: step 3/4. Functions in the biosynthesis of branched-chain amino acids. Catalyzes the dehydration of (2R,3R)-2,3-dihydroxy-3-methylpentanoate (2,3-dihydroxy-3-methylvalerate) into 2-oxo-3-methylpentanoate (2-oxo-3-methylvalerate) and of (2R)-2,3-dihydroxy-3-methylbutanoate (2,3-dihydroxyisovalerate) into 2-oxo-3-methylbutanoate (2-oxoisovalerate), the penultimate precursor to L-isoleucine and L-valine, respectively. The protein is Dihydroxy-acid dehydratase of Sulfurihydrogenibium sp. (strain YO3AOP1).